We begin with the raw amino-acid sequence, 837 residues long: Zinc fingers and homeoboxes protein 2 (837 aa).

Residues 1–41 (MASKRKSTTPCMVRTSQVVEQDVPEEVDRAKEKGIGTPQPD) are disordered. Residues 27–77 (VDRAKEKGIGTPQPDVAKDCWAAELENSSKENEVIEVKSMGESQSKKLQGG) form an interaction with EFNB1 region. The residue at position 37 (threonine 37) is a Phosphothreonine. Residue lysine 64 forms a Glycyl lysine isopeptide (Lys-Gly) (interchain with G-Cter in SUMO2) linkage. C2H2-type zinc fingers lie at residues 78–101 (YECKYCPYSTQNLNEFTEHVDMQH) and 110–133 (YVCAECNFTTKKYDSLSDHNSKFH). A compositionally biased stretch (low complexity) spans 167–180 (TSGPGTGDSDSGIS). The interval 167–203 (TSGPGTGDSDSGISVSKTPIMKPGKPKADAKKVPKKP) is disordered. Basic and acidic residues predominate over residues 192 to 203 (PKADAKKVPKKP). The required for homodimerization stretch occupies residues 195–358 (DAKKVPKKPE…PAQLAPTKVT (164 aa)). 4 consecutive DNA-binding regions (homeobox) follow at residues 263–324 (NTTK…WSPE), 439–501 (TPAS…IVHI), 530–591 (PQKF…EQAV), and 628–690 (SPSP…TVKW). Residues 263–446 (NTTKYNSALD…PLTPASDRKK (184 aa)) are required for repressor activity. The required for interaction with NFYA stretch occupies residues 263 to 497 (NTTKYNSALD…SDHRYRCQRG (235 aa)). The segment at 317–446 (HGISWSPEEV…PLTPASDRKK (130 aa)) is required for nuclear localization. The interval 404-445 (GQKRPLVTPQAAPEPKRPHIAQVPEPPPKVANPPLTPASDRK) is disordered. A compositionally biased stretch (pro residues) spans 427–439 (PEPPPKVANPPLT). Lysine 455 participates in a covalent cross-link: Glycyl lysine isopeptide (Lys-Gly) (interchain with G-Cter in SUMO2). Residues 754–837 (EPAKDCLPAK…DCVPAEAGQA (84 aa)) form a disordered region. 2 positions are modified to phosphoserine: serine 825 and serine 827.

Belongs to the ZHX family. Homodimer (via homeobox domain 1). Heterodimer with ZHX1 (via homeobox domain 1). Heterodimer with ZHX3 (via homeobox domain 1). Heterodimerization with ZHX1 is not necessary for repressor activity. Interacts (via homeobox domain) with NFYA (via N-terminus). Interacts with EFNB1 intracellular domain peptide; the interaction enhances ZHX2 transcriptional repression activity.

It localises to the nucleus. In terms of biological role, acts as a transcriptional repressor. Represses the promoter activity of the CDC25C gene stimulated by NFYA. May play a role in retinal development where it regulates the composition of bipolar cell populations, by promoting differentiation of bipolar OFF-type cells. In the brain, may promote maintenance and suppress differentiation of neural progenitor cells in the developing cortex. In Pongo abelii (Sumatran orangutan), this protein is Zinc fingers and homeoboxes protein 2 (ZHX2).